The following is a 181-amino-acid chain: Peptidyl-tRNA hydrolase 2, mitochondrial (181 aa).

The chain crosses the membrane as a helical span at residues 10–32 (YLVHPGTLSLAAGVACGMCLGWG). Glycyl lysine isopeptide (Lys-Gly) (interchain with G-Cter in ubiquitin) cross-links involve residues K78, K83, K97, K108, K117, and K179.

Belongs to the PTH2 family. Monomer. Ubiquitinated by PRKN during mitophagy, leading to its degradation and enhancement of mitophagy. Deubiquitinated by USP30.

The protein resides in the mitochondrion outer membrane. The enzyme catalyses an N-acyl-L-alpha-aminoacyl-tRNA + H2O = an N-acyl-L-amino acid + a tRNA + H(+). In terms of biological role, peptidyl-tRNA hydrolase which releases tRNAs from the ribosome during protein synthesis. Promotes caspase-independent apoptosis by regulating the function of two transcriptional regulators, AES and TLE1. In Mus musculus (Mouse), this protein is Peptidyl-tRNA hydrolase 2, mitochondrial (Ptrh2).